The chain runs to 597 residues: Coronatine-insensitive protein homolog 1b (597 aa).

Residues 22–64 (SIPEEALHLVLGYVDDPRDREAVSLVCRRWHRIDALTRKHVTV) form the F-box domain. Arginine 92, arginine 353, tyrosine 391, arginine 414, and arginine 501 together coordinate jasmonate.

Interacts with TIFY10C/JAZ8 in a coronatine-dependent manner. Interacts with TIFY3/JAZ1, TIFY6A/JAZ3, TIFY6B/JAZ4, TIFY10A/JAZ6, TIFY10B/JAZ7, TIFY11A/JAZ9, TIFY11B/JAZ10, TIFY11C/JAZ11 and TIFY11D/JAZ12 in a coronatine-dependent manner. In terms of tissue distribution, expressed in roots, shoots, leaf sheaths and leaf blades.

Involved in jasmonate (JA) signaling. Required for jasmonate signaling in plant defense responses. Can complement Arabidopsis coi1-1 mutant and restore jasmonate signaling. Component of SCF(COI1) E3 ubiquitin ligase complexes, which may mediate the ubiquitination and subsequent proteasomal degradation of target proteins, including TIFY/JAZ family. The polypeptide is Coronatine-insensitive protein homolog 1b (Oryza sativa subsp. japonica (Rice)).